The primary structure comprises 489 residues: Adenylosuccinate synthetase 2, chloroplastic (489 aa).

Residues 1 to 54 (MPLASLSLDPAPFPLIRPAAGWSGRVLPVPGPAPRLCRPLRAAPVAPATTDEPS) constitute a chloroplast transit peptide. Residues 76-82 (GDEGKGK) and 104-106 (GHT) each bind GTP. The active-site Proton acceptor is aspartate 77. Positions 77 and 104 each coordinate Mg(2+). Residues 77-80 (DEGK), 102-105 (NAGH), threonine 194, arginine 208, glutamine 288, threonine 303, and arginine 367 contribute to the IMP site. Residue histidine 105 is the Proton donor of the active site. 363–369 (TTTGRPR) lines the substrate pocket. GTP-binding positions include arginine 369, 395 to 397 (KLD), and 478 to 480 (GVG).

It belongs to the adenylosuccinate synthetase family. Homodimer. The cofactor is Mg(2+).

The protein localises to the plastid. The protein resides in the chloroplast. It catalyses the reaction IMP + L-aspartate + GTP = N(6)-(1,2-dicarboxyethyl)-AMP + GDP + phosphate + 2 H(+). It functions in the pathway purine metabolism; AMP biosynthesis via de novo pathway; AMP from IMP: step 1/2. Functionally, plays an important role in the de novo pathway and in the salvage pathway of purine nucleotide biosynthesis. Catalyzes the first committed step in the biosynthesis of AMP from IMP. This Sorghum bicolor (Sorghum) protein is Adenylosuccinate synthetase 2, chloroplastic.